Here is a 674-residue protein sequence, read N- to C-terminus: Methionine--tRNA ligase (674 aa).

Positions 11–21 (PYANGDLHLGH) match the 'HIGH' region motif. Cys-142, Cys-145, Cys-155, and Cys-158 together coordinate Zn(2+). The 'KMSKS' region motif lies at 330-334 (KMSKS). Residue Lys-333 participates in ATP binding. A tRNA-binding domain is found at 574-674 (DFMKVDLRIA…EGAQPGMRVK (101 aa)).

Belongs to the class-I aminoacyl-tRNA synthetase family. MetG type 1 subfamily. In terms of assembly, homodimer. Requires Zn(2+) as cofactor.

The protein resides in the cytoplasm. The catalysed reaction is tRNA(Met) + L-methionine + ATP = L-methionyl-tRNA(Met) + AMP + diphosphate. Is required not only for elongation of protein synthesis but also for the initiation of all mRNA translation through initiator tRNA(fMet) aminoacylation. This is Methionine--tRNA ligase from Francisella tularensis subsp. holarctica (strain FTNF002-00 / FTA).